The primary structure comprises 296 residues: ATP-dependent ribose-1-phosphate kinase (296 aa).

The active-site Proton acceptor is the Asp242.

Belongs to the carbohydrate kinase PfkB family. The cofactor is Mg(2+).

The catalysed reaction is alpha-D-ribose 1-phosphate + ATP = alpha-D-ribose 1,5-bisphosphate + ADP + H(+). With respect to regulation, requires salt for kinase activity. 2.0 M is the optimal KCl concentration. Its function is as follows. Kinase involved in the non-carboxylating pentose bisphosphate pathway, a nucleoside degradation pathway present in some halophilic archaea. Catalyzes the ATP-dependent phosphorylation of ribose 1-phosphate (R1P) to ribose 1,5-bisphosphate (R15P). Shows weak activity towards various other phosphate acceptors, such as xylulose, 2'-deoxyguanosine and D-ribulose. ATP is the most preferred phosphate donor, followed by CTP and GTP. This Halopiger xanaduensis (strain DSM 18323 / JCM 14033 / SH-6) protein is ATP-dependent ribose-1-phosphate kinase.